The following is an 84-amino-acid chain: Large ribosomal subunit protein bL27 (84 aa).

The disordered stretch occupies residues 1–22 (MAHKKAGGSTRNGRDSESKRLG).

The protein belongs to the bacterial ribosomal protein bL27 family.

This Shewanella sp. (strain MR-4) protein is Large ribosomal subunit protein bL27.